Reading from the N-terminus, the 328-residue chain is Malate dehydrogenase (328 aa).

NAD(+) is bound at residue 12–18 (GAAGQIG). Positions 92 and 98 each coordinate substrate. NAD(+) contacts are provided by residues N105, Q112, and 129-131 (TGN). Substrate contacts are provided by N131 and R162. H187 functions as the Proton acceptor in the catalytic mechanism.

This sequence belongs to the LDH/MDH superfamily. MDH type 2 family.

The enzyme catalyses (S)-malate + NAD(+) = oxaloacetate + NADH + H(+). In terms of biological role, catalyzes the reversible oxidation of malate to oxaloacetate. This chain is Malate dehydrogenase, found in Nocardioides sp. (strain ATCC BAA-499 / JS614).